We begin with the raw amino-acid sequence, 98 residues long: Protein Asterix (98 aa).

Transmembrane regions (helical) follow at residues 32-52 (LFSIIFGFLGIMLKYKICLWV) and 78-98 (VSLSLMGLVMAYFGPNSNLFV).

Belongs to the Asterix family.

The protein resides in the membrane. In Dictyostelium discoideum (Social amoeba), this protein is Protein Asterix.